The following is a 321-amino-acid chain: Torsin-2A (321 aa).

The first 26 residues, 1-26 (MAAATRGCRPWGSLLGLLGLVSAAAA), serve as a signal peptide directing secretion. Residue 93 to 100 (GWTGTGKS) coordinates ATP. A glycan (N-linked (GlcNAc...) asparagine) is linked at N149.

The protein belongs to the ClpA/ClpB family. Torsin subfamily. As to quaternary structure, homohexamer. Interacts with TOR1AIP1. As to expression, isoform 1 is expressed ubiquitously, except in cardiac and endothelial tissues.

The protein localises to the endoplasmic reticulum lumen. In Homo sapiens (Human), this protein is Torsin-2A (TOR2A).